A 124-amino-acid polypeptide reads, in one-letter code: MPTINQLIKKPRKSQKEKTASPALQNCPQRRGICTRVMTVTPKKPNSALRKVARVRLSNGFEVTAYIPGIGHNLQEHSVVLIRGGRVKDLPGVRYHIIRGAKDTLGVNNRKQGRSKYGTKKPKA.

Positions 1–24 are disordered; sequence MPTINQLIKKPRKSQKEKTASPAL. Asp89 is modified (3-methylthioaspartic acid).

This sequence belongs to the universal ribosomal protein uS12 family. Part of the 30S ribosomal subunit. Contacts proteins S8 and S17. May interact with IF1 in the 30S initiation complex.

Functionally, with S4 and S5 plays an important role in translational accuracy. Its function is as follows. Interacts with and stabilizes bases of the 16S rRNA that are involved in tRNA selection in the A site and with the mRNA backbone. Located at the interface of the 30S and 50S subunits, it traverses the body of the 30S subunit contacting proteins on the other side and probably holding the rRNA structure together. The combined cluster of proteins S8, S12 and S17 appears to hold together the shoulder and platform of the 30S subunit. This is Small ribosomal subunit protein uS12 from Borrelia hermsii (strain HS1 / DAH).